The chain runs to 38 residues: Photosystem II reaction center protein L (38 aa).

A helical membrane pass occupies residues 17 to 37; the sequence is SLYWGLLLIFVLAVLFSNYFF.

It belongs to the PsbL family. As to quaternary structure, PSII is composed of 1 copy each of membrane proteins PsbA, PsbB, PsbC, PsbD, PsbE, PsbF, PsbH, PsbI, PsbJ, PsbK, PsbL, PsbM, PsbT, PsbX, PsbY, PsbZ, Psb30/Ycf12, at least 3 peripheral proteins of the oxygen-evolving complex and a large number of cofactors. It forms dimeric complexes.

Its subcellular location is the plastid. It is found in the chloroplast thylakoid membrane. In terms of biological role, one of the components of the core complex of photosystem II (PSII). PSII is a light-driven water:plastoquinone oxidoreductase that uses light energy to abstract electrons from H(2)O, generating O(2) and a proton gradient subsequently used for ATP formation. It consists of a core antenna complex that captures photons, and an electron transfer chain that converts photonic excitation into a charge separation. This subunit is found at the monomer-monomer interface and is required for correct PSII assembly and/or dimerization. The chain is Photosystem II reaction center protein L from Oenothera argillicola (Appalachian evening primrose).